Here is a 988-residue protein sequence, read N- to C-terminus: Bifunctional glutamine synthetase adenylyltransferase/adenylyl-removing enzyme (988 aa).

The adenylyl removase stretch occupies residues 1–474; it reads MSSSAIDADI…HYSKLFEGDP (474 aa). Residues 480-988 form an adenylyl transferase region; it reads LPIDYAGGAE…FNRLIGGNGE (509 aa).

This sequence belongs to the GlnE family. Mg(2+) serves as cofactor.

It carries out the reaction [glutamine synthetase]-O(4)-(5'-adenylyl)-L-tyrosine + phosphate = [glutamine synthetase]-L-tyrosine + ADP. The catalysed reaction is [glutamine synthetase]-L-tyrosine + ATP = [glutamine synthetase]-O(4)-(5'-adenylyl)-L-tyrosine + diphosphate. Involved in the regulation of glutamine synthetase GlnA, a key enzyme in the process to assimilate ammonia. When cellular nitrogen levels are high, the C-terminal adenylyl transferase (AT) inactivates GlnA by covalent transfer of an adenylyl group from ATP to specific tyrosine residue of GlnA, thus reducing its activity. Conversely, when nitrogen levels are low, the N-terminal adenylyl removase (AR) activates GlnA by removing the adenylyl group by phosphorolysis, increasing its activity. The regulatory region of GlnE binds the signal transduction protein PII (GlnB) which indicates the nitrogen status of the cell. This is Bifunctional glutamine synthetase adenylyltransferase/adenylyl-removing enzyme from Rhodopseudomonas palustris (strain HaA2).